The primary structure comprises 730 residues: Synaptotagmin-like protein 5 (730 aa).

The RabBD domain occupies 7-123 (FINLSFLLDH…IITGEWFFEE (117 aa)). The segment at 64-106 (CVHCHRNLGLIFDRGDPCQACSLRVCRECRVAGPNGSWKCTVC) adopts an FYVE-type zinc-finger fold. Ser147 is subject to Phosphoserine. 3 disordered regions span residues 147–188 (SPGA…GFLL), 217–271 (QHFR…TRTV), and 294–355 (SQEL…LDKD). Polar residues-rich tracts occupy residues 248 to 271 (PKSS…TRTV) and 305 to 322 (TSGT…SSDQ). 2 consecutive C2 domains span residues 406-527 (VSGE…DEWF) and 563-694 (PPEQ…VDWM).

Binds RAB27A that has been activated by GTP-binding, and possibly also RAB3A and RAB6A. In terms of tissue distribution, highly expressed in placenta and liver.

Its subcellular location is the membrane. May act as Rab effector protein and play a role in vesicle trafficking. Binds phospholipids. The chain is Synaptotagmin-like protein 5 (SYTL5) from Homo sapiens (Human).